Here is a 347-residue protein sequence, read N- to C-terminus: MDESNSQFEKRKRDHIRIALDPRSQTDGQNGLDSITLIHEALPDLNFKEVDISTSFFFSGESIPLSSPIFISSMTAGHEKGREINEALARLSDRRQILMGVGSQRRELEDSNAAEEWARVRKQAPKARLLGNIGIAQLIKSPIDKIRRLIDSTEAVALFVHLNPLQEALQPEGTTDFKNGLAAIENLVKLAGVPVIVKETGCGFSVDTLKRLSSTGIYGVDVSGKGGTHWGRVEGYRSEESDMLYHVAQTFANWGISTKQSMLNAIDARVEYQLWASGGVRNGLEIGKLMALGASKVGVAKPFLEAALQGDEALEKLLTQLETELKVTMFCTGSRNLKDLQSKKVIQ.

A disordered region spans residues 1–31; it reads MDESNSQFEKRKRDHIRIALDPRSQTDGQNG. A compositionally biased stretch (basic and acidic residues) spans 8–20; sequence FEKRKRDHIRIAL. Position 11-12 (11-12) interacts with substrate; the sequence is RK. FMN is bound by residues Ser-72, 73–75, Ser-103, and Asn-132; that span reads SMT. 103 to 105 contributes to the substrate binding site; it reads SQR. Residue Gln-166 coordinates substrate. Glu-167 serves as a coordination point for Mg(2+). FMN-binding positions include Lys-198, Ser-223, Thr-228, 279–281, and 300–301; these read GVR and AK.

The protein belongs to the IPP isomerase type 2 family. Homooctamer. Dimer of tetramers. Requires FMN as cofactor. The cofactor is NADPH. Mg(2+) is required as a cofactor.

It is found in the cytoplasm. It catalyses the reaction isopentenyl diphosphate = dimethylallyl diphosphate. In terms of biological role, involved in the biosynthesis of isoprenoids. Catalyzes the 1,3-allylic rearrangement of the homoallylic substrate isopentenyl (IPP) to its allylic isomer, dimethylallyl diphosphate (DMAPP). This chain is Isopentenyl-diphosphate delta-isomerase, found in Bdellovibrio bacteriovorus (strain ATCC 15356 / DSM 50701 / NCIMB 9529 / HD100).